The following is a 353-amino-acid chain: Photosystem II D2 protein (353 aa).

Thr2 carries the N-acetylthreonine modification. A Phosphothreonine modification is found at Thr2. Residues 41–61 (CAYFALGGWFTGTTFVTSWYT) form a helical membrane-spanning segment. A chlorophyll a-binding site is contributed by His118. Residues 125-141 (GFMLRQFELARSVQLRP) traverse the membrane as a helical segment. Pheophytin a-binding residues include Gln130 and Asn143. Residues 153–166 (VFVSVFLIYPLGQS) traverse the membrane as a helical segment. Residue His198 participates in chlorophyll a binding. The helical transmembrane segment at 208–228 (AALLCAIHGATVENTLFEDGD) threads the bilayer. His215 and Phe262 together coordinate a plastoquinone. His215 is a binding site for Fe cation. His269 provides a ligand contact to Fe cation. A helical transmembrane segment spans residues 279 to 295 (GLWMSAIGVVGLALNLR).

It belongs to the reaction center PufL/M/PsbA/D family. As to quaternary structure, PSII is composed of 1 copy each of membrane proteins PsbA, PsbB, PsbC, PsbD, PsbE, PsbF, PsbH, PsbI, PsbJ, PsbK, PsbL, PsbM, PsbT, PsbX, PsbY, PsbZ, Psb30/Ycf12, at least 3 peripheral proteins of the oxygen-evolving complex and a large number of cofactors. It forms dimeric complexes. The cofactor is The D1/D2 heterodimer binds P680, chlorophylls that are the primary electron donor of PSII, and subsequent electron acceptors. It shares a non-heme iron and each subunit binds pheophytin, quinone, additional chlorophylls, carotenoids and lipids. There is also a Cl(-1) ion associated with D1 and D2, which is required for oxygen evolution. The PSII complex binds additional chlorophylls, carotenoids and specific lipids..

It is found in the plastid. The protein localises to the chloroplast thylakoid membrane. It carries out the reaction 2 a plastoquinone + 4 hnu + 2 H2O = 2 a plastoquinol + O2. In terms of biological role, photosystem II (PSII) is a light-driven water:plastoquinone oxidoreductase that uses light energy to abstract electrons from H(2)O, generating O(2) and a proton gradient subsequently used for ATP formation. It consists of a core antenna complex that captures photons, and an electron transfer chain that converts photonic excitation into a charge separation. The D1/D2 (PsbA/PsbD) reaction center heterodimer binds P680, the primary electron donor of PSII as well as several subsequent electron acceptors. D2 is needed for assembly of a stable PSII complex. The chain is Photosystem II D2 protein from Cycas taitungensis (Prince sago).